Reading from the N-terminus, the 580-residue chain is Zinc finger CCCH domain-containing protein 47 (580 aa).

ANK repeat units follow at residues 72–102 (EERTPLMVAAMYGSIKVLTFIVSTGKSDVNR) and 107–139 (ERVTPLHCAVAGCSVNMIEVINVLLDASALVNS). 2 C3H1-type zinc fingers span residues 251–278 (PYTCVPCPEFRKGSCPKGDSCEYAHGVF) and 286–310 (QYKTRLCKDETGCARKVCFFAHKRE). Residues 421–451 (YVSSPSRNSQMGQNMNQHYPSSPVRQPPSQH) form a disordered region.

Expressed in roots and anthers.

Its subcellular location is the nucleus. Functionally, involved in salt stress response. May positively modulate plant tolerance to salt stress. The polypeptide is Zinc finger CCCH domain-containing protein 47 (Arabidopsis thaliana (Mouse-ear cress)).